Consider the following 328-residue polypeptide: Probable membrane-associated kinase regulator 4 (328 aa).

The tract at residues 213 to 253 (GQIKTERPKKQSNGSVSGSHRRSFSVSMRRQAAKSSNNKSS) is disordered. The span at 223 to 240 (QSNGSVSGSHRRSFSVSM) shows a compositional bias: polar residues.

The protein resides in the cell membrane. The sequence is that of Probable membrane-associated kinase regulator 4 (MAKR4) from Arabidopsis thaliana (Mouse-ear cress).